The following is a 195-amino-acid chain: Phosphoheptose isomerase (195 aa).

An SIS domain is found at 36–195 (LAHCLLSDGK…DLVDHQLFGE (160 aa)). 51-53 (NGG) contacts substrate. Zn(2+)-binding residues include His-60 and Glu-64. Substrate-binding positions include Glu-64, 93–94 (ND), 119–121 (STS), Ser-124, and Gln-174. The Zn(2+) site is built by Gln-174 and His-182.

The protein belongs to the SIS family. GmhA subfamily. As to quaternary structure, homotetramer. Zn(2+) serves as cofactor.

The protein resides in the cytoplasm. It catalyses the reaction 2 D-sedoheptulose 7-phosphate = D-glycero-alpha-D-manno-heptose 7-phosphate + D-glycero-beta-D-manno-heptose 7-phosphate. The protein operates within carbohydrate biosynthesis; D-glycero-D-manno-heptose 7-phosphate biosynthesis; D-glycero-alpha-D-manno-heptose 7-phosphate and D-glycero-beta-D-manno-heptose 7-phosphate from sedoheptulose 7-phosphate: step 1/1. Functionally, catalyzes the isomerization of sedoheptulose 7-phosphate in D-glycero-D-manno-heptose 7-phosphate. The chain is Phosphoheptose isomerase from Methylococcus capsulatus (strain ATCC 33009 / NCIMB 11132 / Bath).